The primary structure comprises 320 residues: Coproporphyrin III ferrochelatase (320 aa).

The Fe(2+) site is built by His-194 and Glu-273.

This sequence belongs to the ferrochelatase family.

It is found in the cytoplasm. It catalyses the reaction Fe-coproporphyrin III + 2 H(+) = coproporphyrin III + Fe(2+). It participates in porphyrin-containing compound metabolism; protoheme biosynthesis. Involved in coproporphyrin-dependent heme b biosynthesis. Catalyzes the insertion of ferrous iron into coproporphyrin III to form Fe-coproporphyrin III. The chain is Coproporphyrin III ferrochelatase from Symbiobacterium thermophilum (strain DSM 24528 / JCM 14929 / IAM 14863 / T).